A 629-amino-acid chain; its full sequence is tRNA uridine 5-carboxymethylaminomethyl modification enzyme MnmG (629 aa).

FAD-binding positions include 13–18, Val-125, and Ser-180; that span reads GGGHAG. NAD(+) is bound at residue 273–287; it reads GPRYCPSIEDKVMRF. Position 370 (Gln-370) interacts with FAD.

This sequence belongs to the MnmG family. Homodimer. Heterotetramer of two MnmE and two MnmG subunits. FAD serves as cofactor.

The protein resides in the cytoplasm. In terms of biological role, NAD-binding protein involved in the addition of a carboxymethylaminomethyl (cmnm) group at the wobble position (U34) of certain tRNAs, forming tRNA-cmnm(5)s(2)U34. This chain is tRNA uridine 5-carboxymethylaminomethyl modification enzyme MnmG, found in Salmonella agona (strain SL483).